We begin with the raw amino-acid sequence, 402 residues long: Queuine tRNA-ribosyltransferase-like protein (402 aa).

This sequence belongs to the queuine tRNA-ribosyltransferase family.

This Theileria annulata protein is Queuine tRNA-ribosyltransferase-like protein.